The primary structure comprises 429 residues: Phosphomethylpyrimidine synthase (429 aa).

Residues Asn66, Met95, Tyr124, His163, 185 to 187 (SRG), 226 to 229 (DGLR), and Glu265 contribute to the substrate site. His269 is a binding site for Zn(2+). Tyr292 contributes to the substrate binding site. His333 contributes to the Zn(2+) binding site. Residues Cys407, Cys410, and Cys414 each coordinate [4Fe-4S] cluster.

This sequence belongs to the ThiC family. Requires [4Fe-4S] cluster as cofactor.

The catalysed reaction is 5-amino-1-(5-phospho-beta-D-ribosyl)imidazole + S-adenosyl-L-methionine = 4-amino-2-methyl-5-(phosphooxymethyl)pyrimidine + CO + 5'-deoxyadenosine + formate + L-methionine + 3 H(+). It participates in cofactor biosynthesis; thiamine diphosphate biosynthesis. Functionally, catalyzes the synthesis of the hydroxymethylpyrimidine phosphate (HMP-P) moiety of thiamine from aminoimidazole ribotide (AIR) in a radical S-adenosyl-L-methionine (SAM)-dependent reaction. This Pyrococcus abyssi (strain GE5 / Orsay) protein is Phosphomethylpyrimidine synthase.